We begin with the raw amino-acid sequence, 445 residues long: Phosphoglucosamine mutase (445 aa).

Ser105 serves as the catalytic Phosphoserine intermediate. 4 residues coordinate Mg(2+): Ser105, Asp244, Asp246, and Asp248. Ser105 is modified (phosphoserine).

This sequence belongs to the phosphohexose mutase family. Mg(2+) is required as a cofactor. In terms of processing, activated by phosphorylation.

The catalysed reaction is alpha-D-glucosamine 1-phosphate = D-glucosamine 6-phosphate. Catalyzes the conversion of glucosamine-6-phosphate to glucosamine-1-phosphate. The polypeptide is Phosphoglucosamine mutase (Janthinobacterium sp. (strain Marseille) (Minibacterium massiliensis)).